A 579-amino-acid polypeptide reads, in one-letter code: L-ascorbate oxidase (579 aa).

The signal sequence occupies residues 1–30 (MLQMGKAREPNFLILFFFGLILAFGISSEG). Plastocyanin-like domains follow at residues 33–152 (IRHY…LIVD) and 164–330 (DGEI…NYLP). 3 disulfide bridges follow: Cys-49–Cys-231, Cys-111–Cys-568, and Cys-210–Cys-223. His-90 and His-92 together coordinate Cu cation. Residue Asn-122 is glycosylated (N-linked (GlcNAc...) asparagine). Cu cation contacts are provided by His-134 and His-136. 2 N-linked (GlcNAc...) asparagine glycosylation sites follow: Asn-355 and Asn-470. In terms of domain architecture, Plastocyanin-like 3 spans 374–553 (NRRIFLLNTQ…HMGMGVVFAE (180 aa)). Residues His-475, His-478, His-480, His-536, Cys-537, His-538, His-542, and Met-547 each contribute to the Cu cation site.

It belongs to the multicopper oxidase family. Dimer. Cu cation is required as a cofactor.

It localises to the secreted. It carries out the reaction 4 L-ascorbate + O2 = 4 monodehydro-L-ascorbate radical + 2 H2O. Functionally, may be involved in a redox system involving ascorbic acid. The sequence is that of L-ascorbate oxidase (AAO) from Cucurbita maxima (Pumpkin).